A 227-amino-acid chain; its full sequence is Orotidine 5'-phosphate decarboxylase (227 aa).

Substrate-binding positions include D12, K34, 61–70 (DLKLHDIPNT), T117, R178, Q187, G207, and R208. K63 serves as the catalytic Proton donor.

Belongs to the OMP decarboxylase family. Type 1 subfamily. In terms of assembly, homodimer.

The enzyme catalyses orotidine 5'-phosphate + H(+) = UMP + CO2. The protein operates within pyrimidine metabolism; UMP biosynthesis via de novo pathway; UMP from orotate: step 2/2. In terms of biological role, catalyzes the decarboxylation of orotidine 5'-monophosphate (OMP) to uridine 5'-monophosphate (UMP). This chain is Orotidine 5'-phosphate decarboxylase, found in Anaeromyxobacter sp. (strain K).